We begin with the raw amino-acid sequence, 158 residues long: Transcriptional regulator MraZ (158 aa).

SpoVT-AbrB domains lie at 5 to 52 (IYET…TFSS) and 91 to 134 (AVEC…SQAE).

It belongs to the MraZ family. In terms of assembly, forms oligomers.

The protein localises to the cytoplasm. The protein resides in the nucleoid. This chain is Transcriptional regulator MraZ, found in Geobacter sulfurreducens (strain ATCC 51573 / DSM 12127 / PCA).